The primary structure comprises 192 residues: Peptidyl-tRNA hydrolase (192 aa).

Position 18 (Tyr-18) interacts with tRNA. His-23 functions as the Proton acceptor in the catalytic mechanism. TRNA-binding residues include Phe-69, Asn-71, and Asn-117.

It belongs to the PTH family. As to quaternary structure, monomer.

The protein localises to the cytoplasm. It carries out the reaction an N-acyl-L-alpha-aminoacyl-tRNA + H2O = an N-acyl-L-amino acid + a tRNA + H(+). Hydrolyzes ribosome-free peptidyl-tRNAs (with 1 or more amino acids incorporated), which drop off the ribosome during protein synthesis, or as a result of ribosome stalling. Functionally, catalyzes the release of premature peptidyl moieties from peptidyl-tRNA molecules trapped in stalled 50S ribosomal subunits, and thus maintains levels of free tRNAs and 50S ribosomes. The chain is Peptidyl-tRNA hydrolase from Neisseria meningitidis serogroup B (strain ATCC BAA-335 / MC58).